The chain runs to 91 residues: Small ribosomal subunit protein eS24 (91 aa).

Residues 51 to 91 (QRRKDAAAHKEAYNAMPEAERRHLNSEKYANRKAEVSYKHR) form a disordered region.

The protein belongs to the eukaryotic ribosomal protein eS24 family.

The chain is Small ribosomal subunit protein eS24 from Caenorhabditis elegans.